The primary structure comprises 364 residues: Putative agmatine deiminase (364 aa).

The active-site Amidino-cysteine intermediate is Cys-355.

The protein belongs to the agmatine deiminase family.

The catalysed reaction is agmatine + H2O = N-carbamoylputrescine + NH4(+). The chain is Putative agmatine deiminase from Mycoplasma mycoides subsp. mycoides SC (strain CCUG 32753 / NCTC 10114 / PG1).